We begin with the raw amino-acid sequence, 310 residues long: tRNA pseudouridine synthase B (310 aa).

The active-site Nucleophile is the Asp-47.

Belongs to the pseudouridine synthase TruB family. Type 1 subfamily.

It catalyses the reaction uridine(55) in tRNA = pseudouridine(55) in tRNA. Responsible for synthesis of pseudouridine from uracil-55 in the psi GC loop of transfer RNAs. The sequence is that of tRNA pseudouridine synthase B from Caulobacter vibrioides (strain ATCC 19089 / CIP 103742 / CB 15) (Caulobacter crescentus).